The primary structure comprises 239 residues: MKQKSWDIHLEEMMEAGIHFGHQVRKWNPKMAPFIFTERKSVHIINLTQTARFLSEACDLAANAASRGKQFLIVGTKYQAADLVVSAASGARCHYINQKWLGGMLTNWSTIETRLQKFRNLEKEKLAGIFERLPKKEVADSERRLSRLRKYFGGIKYMTALPDIVIIIDQRKEFTAIRECITLGIPTICLVDTDCDPNVTDIPIPANDDARASIKWISNKLTLAICEGRLNSNANCMNS.

This sequence belongs to the universal ribosomal protein uS2 family.

The protein resides in the plastid. In Aneura mirabilis (Parasitic liverwort), this protein is Small ribosomal subunit protein uS2c (rps2).